We begin with the raw amino-acid sequence, 366 residues long: tRNA 2-selenouridine synthase (366 aa).

The 124-residue stretch at 14–137 folds into the Rhodanese domain; the sequence is LLENRPLIDV…IRSFLINTIE (124 aa). The S-selanylcysteine intermediate role is filled by C97.

Belongs to the SelU family. In terms of assembly, monomer.

It carries out the reaction 5-methylaminomethyl-2-thiouridine(34) in tRNA + selenophosphate + (2E)-geranyl diphosphate + H2O + H(+) = 5-methylaminomethyl-2-selenouridine(34) in tRNA + (2E)-thiogeraniol + phosphate + diphosphate. The enzyme catalyses 5-methylaminomethyl-2-thiouridine(34) in tRNA + (2E)-geranyl diphosphate = 5-methylaminomethyl-S-(2E)-geranyl-thiouridine(34) in tRNA + diphosphate. The catalysed reaction is 5-methylaminomethyl-S-(2E)-geranyl-thiouridine(34) in tRNA + selenophosphate + H(+) = 5-methylaminomethyl-2-(Se-phospho)selenouridine(34) in tRNA + (2E)-thiogeraniol. It catalyses the reaction 5-methylaminomethyl-2-(Se-phospho)selenouridine(34) in tRNA + H2O = 5-methylaminomethyl-2-selenouridine(34) in tRNA + phosphate. Involved in the post-transcriptional modification of the uridine at the wobble position (U34) of tRNA(Lys), tRNA(Glu) and tRNA(Gln). Catalyzes the conversion of 2-thiouridine (S2U-RNA) to 2-selenouridine (Se2U-RNA). Acts in a two-step process involving geranylation of 2-thiouridine (S2U) to S-geranyl-2-thiouridine (geS2U) and subsequent selenation of the latter derivative to 2-selenouridine (Se2U) in the tRNA chain. This chain is tRNA 2-selenouridine synthase, found in Shewanella frigidimarina (strain NCIMB 400).